The sequence spans 424 residues: Histidine--tRNA ligase (424 aa).

This sequence belongs to the class-II aminoacyl-tRNA synthetase family. As to quaternary structure, homodimer.

It is found in the cytoplasm. It catalyses the reaction tRNA(His) + L-histidine + ATP = L-histidyl-tRNA(His) + AMP + diphosphate + H(+). This Salmonella gallinarum (strain 287/91 / NCTC 13346) protein is Histidine--tRNA ligase.